A 501-amino-acid polypeptide reads, in one-letter code: Actin nucleation-promoting factor WASL (501 aa).

At serine 2 the chain carries N-acetylserine. Positions 31 to 138 (LGKKCVTMSS…KAVTDLLGRR (108 aa)) constitute a WH1 domain. Disordered stretches follow at residues 135–158 (LGRR…PMAT) and 180–202 (SHTK…DIGT). Residues 183-195 (KEKKKGKAKKKRL) show a composition bias toward basic residues. The region spanning 200–213 (IGTPSNFQHIGHVG) is the CRIB domain. The residue at position 239 (serine 239) is a Phosphoserine; by TNK2. Tyrosine 253 is subject to Phosphotyrosine; by FAK1 and TNK2. Disordered stretches follow at residues 263–405 (EAVK…KAAL) and 442–501 (QLKS…EWED). Composition is skewed to pro residues over residues 273–361 (APPP…PPPL) and 368–387 (APPP…PPGL). Omega-N-methylarginine is present on arginine 304. WH2 domains follow at residues 401-418 (NKAA…LKKV) and 429-446 (GRDA…LKSV). Positions 442–453 (QLKSVSDGQEST) are enriched in polar residues. Phosphoserine occurs at positions 480 and 481. Positions 482-501 (DEDEDDDDEEDFQDDDEWED) are enriched in acidic residues.

As to quaternary structure, binds actin and the Arp2/3 complex. Interacts with CDC42. Interacts with FCHSD1. Interacts with FCHSD2. Binds to SH3 domains of GRB2. Interacts with the C-terminal SH3 domain of DNMBP. Interacts with SNX9. Interacts with the WW domains of PRPF40A/FBP11. Interacts with PTK2/FAK1. Interacts with PACSIN1, PACSIN2 and PACSIN3. Interacts with NOSTRIN. Binds to TNK2. Interacts with SNX33. Interacts with NONO (via second RRM domain); the interaction is direct. Component of a multiprotein complex with NONO and SFPQ; associates with the complex via direct interaction with NONO. In terms of processing, phosphorylation at Ser-239, Tyr-253, Ser-480 and Ser-481 enhances actin polymerization activity.

It is found in the cytoplasm. The protein localises to the cytoskeleton. The protein resides in the nucleus. In terms of biological role, regulates actin polymerization by stimulating the actin-nucleating activity of the Arp2/3 complex. Involved in various processes, such as mitosis and cytokinesis, via its role in the regulation of actin polymerization. Together with CDC42, involved in the extension and maintenance of the formation of thin, actin-rich surface projections called filopodia. In addition to its role in the cytoplasm, also plays a role in the nucleus by regulating gene transcription, probably by promoting nuclear actin polymerization. Binds to HSF1/HSTF1 and forms a complex on heat shock promoter elements (HSE) that negatively regulates HSP90 expression. Plays a role in dendrite spine morphogenesis. The polypeptide is Actin nucleation-promoting factor WASL (Wasl) (Rattus norvegicus (Rat)).